The sequence spans 704 residues: Elongation factor G (704 aa).

A tr-type G domain is found at 8 to 291; that stretch reads ANVRNIGIMA…AVIEYLPSPV (284 aa). GTP is bound by residues 17-24, 90-94, and 144-147; these read AHIDAGKT, DTPGH, and NKMD.

This sequence belongs to the TRAFAC class translation factor GTPase superfamily. Classic translation factor GTPase family. EF-G/EF-2 subfamily.

Its subcellular location is the cytoplasm. In terms of biological role, catalyzes the GTP-dependent ribosomal translocation step during translation elongation. During this step, the ribosome changes from the pre-translocational (PRE) to the post-translocational (POST) state as the newly formed A-site-bound peptidyl-tRNA and P-site-bound deacylated tRNA move to the P and E sites, respectively. Catalyzes the coordinated movement of the two tRNA molecules, the mRNA and conformational changes in the ribosome. This chain is Elongation factor G, found in Chlorobium phaeobacteroides (strain BS1).